Reading from the N-terminus, the 274-residue chain is MAD2L1-binding protein (274 aa).

An interaction with MAD2L1 region spans residues 45–78 (ASEAFCPRDCMVPVVFPGPVSQEGCCQFTCELLK). Ser102 carries the post-translational modification Phosphoserine.

The protein belongs to the MAD2L1BP family. In terms of assembly, interacts with MAD2L1.

Its subcellular location is the nucleus. The protein localises to the cytoplasm. It localises to the cytoskeleton. It is found in the spindle. Functionally, may function to silence the spindle checkpoint and allow mitosis to proceed through anaphase by binding MAD2L1 after it has become dissociated from the MAD2L1-CDC20 complex. The polypeptide is MAD2L1-binding protein (MAD2L1BP) (Homo sapiens (Human)).